The following is a 701-amino-acid chain: F-box/LRR-repeat protein 17 (701 aa).

3 disordered regions span residues 73-93 (SAGL…RDGA), 227-250 (GGGG…CQAP), and 279-321 (VRAG…IPDI). Positions 81 to 90 (PLSPPPPPPR) are enriched in pro residues. Positions 227-236 (GGGGPAGGGA) are enriched in gly residues. The segment covering 285–294 (APSSAQQQPE) has biased composition (polar residues). The F-box domain occupies 318-365 (IPDINQLPPSILLKIFSNLSLNERCLSASLVCKYWRDLCLDFQFWKQL).

It belongs to the FBXL17 family. Part of the SCF (SKP1-CUL1-F-box) E3 ubiquitin-protein ligase complex SCF(FBXL17) composed of CUL1, SKP1, RBX1 and FBXL17. Interacts with BTB domain-containing proteins such as KLHL12, BCL6 and BACH1; specifically recognizes and binds a conserved degron of non-consecutive residues present at the interface of BTB dimers of aberrant composition. Interacts with SUFU. Interacts with PRMT1.

The protein localises to the cytoplasm. It localises to the nucleus. Its function is as follows. Substrate-recognition component of the SCF(FBXL17) E3 ubiquitin ligase complex, a key component of a quality control pathway required to ensure functional dimerization of BTB domain-containing proteins (dimerization quality control, DQC). FBXL17 specifically recognizes and binds a conserved degron of non-consecutive residues present at the interface of BTB dimers of aberrant composition: aberrant BTB dimer are then ubiquitinated by the SCF(FBXL17) complex and degraded by the proteasome. The ability of the SCF(FBXL17) complex to eliminate compromised BTB dimers is required for the differentiation and survival of neural crest and neuronal cells. The SCF(FBXL17) complex mediates ubiquitination and degradation of BACH1. The SCF(FBXL17) complex is also involved in the regulation of the hedgehog/smoothened (Hh) signaling pathway by mediating the ubiquitination and degradation of SUFU, allowing the release of GLI1 from SUFU for proper Hh signal transduction. The SCF(FBXL17) complex mediates ubiquitination and degradation of PRMT1. The protein is F-box/LRR-repeat protein 17 of Mus musculus (Mouse).